Here is a 282-residue protein sequence, read N- to C-terminus: HTH-type transcriptional activator RhaR (282 aa).

The region spanning 179–277 (DKLITALANS…GMTPSQWRHL (99 aa)) is the HTH araC/xylS-type domain. DNA-binding regions (H-T-H motif) lie at residues 196–217 (DAFC…RAQT) and 244–267 (VSEI…TRET).

Binds DNA as a dimer.

It localises to the cytoplasm. Its function is as follows. Activates expression of the rhaSR operon in response to L-rhamnose. This is HTH-type transcriptional activator RhaR from Salmonella choleraesuis (strain SC-B67).